Here is a 380-residue protein sequence, read N- to C-terminus: Transaldolase (380 aa).

The active-site Schiff-base intermediate with substrate is the Lys141.

The protein belongs to the transaldolase family. Type 2 subfamily.

Its subcellular location is the cytoplasm. The catalysed reaction is D-sedoheptulose 7-phosphate + D-glyceraldehyde 3-phosphate = D-erythrose 4-phosphate + beta-D-fructose 6-phosphate. Its pathway is carbohydrate degradation; pentose phosphate pathway; D-glyceraldehyde 3-phosphate and beta-D-fructose 6-phosphate from D-ribose 5-phosphate and D-xylulose 5-phosphate (non-oxidative stage): step 2/3. Transaldolase is important for the balance of metabolites in the pentose-phosphate pathway. In Trichodesmium erythraeum (strain IMS101), this protein is Transaldolase.